Consider the following 274-residue polypeptide: D-aminoacyl-tRNA deacylase (274 aa).

The protein belongs to the DtdA deacylase family. In terms of assembly, monomer. The cofactor is Zn(2+).

The enzyme catalyses a D-aminoacyl-tRNA + H2O = a tRNA + a D-alpha-amino acid + H(+). It carries out the reaction glycyl-tRNA(Ala) + H2O = tRNA(Ala) + glycine + H(+). Functionally, D-aminoacyl-tRNA deacylase with broad substrate specificity. By recycling D-aminoacyl-tRNA to D-amino acids and free tRNA molecules, this enzyme counteracts the toxicity associated with the formation of D-aminoacyl-tRNA entities in vivo. This is D-aminoacyl-tRNA deacylase from Pyrococcus horikoshii (strain ATCC 700860 / DSM 12428 / JCM 9974 / NBRC 100139 / OT-3).